A 268-amino-acid chain; its full sequence is Shikimate dehydrogenase (NADP(+)) (268 aa).

Shikimate-binding positions include Ser13 to Ser15 and Thr60. Catalysis depends on Lys64, which acts as the Proton acceptor. Glu76 lines the NADP(+) pocket. 2 residues coordinate shikimate: Asn85 and Asp100. NADP(+) contacts are provided by residues Gly124–Ala128, Asn148–Arg153, and Ile209. Tyr211 contacts shikimate. Gly232 is a binding site for NADP(+).

The protein belongs to the shikimate dehydrogenase family. Homodimer.

The catalysed reaction is shikimate + NADP(+) = 3-dehydroshikimate + NADPH + H(+). Its pathway is metabolic intermediate biosynthesis; chorismate biosynthesis; chorismate from D-erythrose 4-phosphate and phosphoenolpyruvate: step 4/7. In terms of biological role, involved in the biosynthesis of the chorismate, which leads to the biosynthesis of aromatic amino acids. Catalyzes the reversible NADPH linked reduction of 3-dehydroshikimate (DHSA) to yield shikimate (SA). This chain is Shikimate dehydrogenase (NADP(+)), found in Staphylococcus aureus (strain MRSA252).